A 560-amino-acid polypeptide reads, in one-letter code: 2-isopropylmalate synthase (560 aa).

The Pyruvate carboxyltransferase domain occupies 30-303; it reads PVWCSVDLRD…DPEIDCSNIE (274 aa). Positions 39, 242, 244, and 278 each coordinate Mg(2+). The segment at 437 to 560 is regulatory domain; that stretch reads QPEGRLRFVD…RVLDVKAGKA (124 aa).

Belongs to the alpha-IPM synthase/homocitrate synthase family. LeuA type 2 subfamily. Homodimer. Requires Mg(2+) as cofactor.

It is found in the cytoplasm. The enzyme catalyses 3-methyl-2-oxobutanoate + acetyl-CoA + H2O = (2S)-2-isopropylmalate + CoA + H(+). It functions in the pathway amino-acid biosynthesis; L-leucine biosynthesis; L-leucine from 3-methyl-2-oxobutanoate: step 1/4. Catalyzes the condensation of the acetyl group of acetyl-CoA with 3-methyl-2-oxobutanoate (2-ketoisovalerate) to form 3-carboxy-3-hydroxy-4-methylpentanoate (2-isopropylmalate). The chain is 2-isopropylmalate synthase from Rhizobium johnstonii (strain DSM 114642 / LMG 32736 / 3841) (Rhizobium leguminosarum bv. viciae).